We begin with the raw amino-acid sequence, 188 residues long: UPF0157 protein VC_A0354 (188 aa).

It belongs to the UPF0157 (GrpB) family.

The polypeptide is UPF0157 protein VC_A0354 (Vibrio cholerae serotype O1 (strain ATCC 39315 / El Tor Inaba N16961)).